We begin with the raw amino-acid sequence, 50 residues long: Thrombin-like enzyme BpirSP41 (50 aa).

Residues 1 to 50 (VVGGDECDINEHPFLAFLYSHGYFCGLTLINQEWVLTAAHCDRRFMRIYL) enclose the Peptidase S1 domain. C25 and C41 are oxidised to a cystine. H40 functions as the Charge relay system in the catalytic mechanism.

The protein belongs to the peptidase S1 family. Snake venom subfamily. As to quaternary structure, monomer. Post-translationally, N-glycosylated. Expressed by the venom gland.

The protein resides in the secreted. With respect to regulation, inhibited by serine protease inhibitors PMSF, benzamidine, leupeptin and aprotinin, as well as by copper ions (Cu2+). Not inhibited by metalloprotease inhibitors EDTA, EGTA and 1,10-phenanthroline, as well as by barium (Ba2+) and calcium ion (Ca2+). Functionally, snake venom serine protease that interferes with the hemostatic system of the prey. It almost completely degrades both Aalpha (FGA) and Bbeta (FGB) chains of fibrinogen. It presents a higher ability to degrade fibrin clots than BpirSP27. It hydrolyzes chromogenic substrates S-2238 (used for testing thrombin activity), S-2222 (factor Xa), S-2266 (glandular kallikrein and factor XIa), and S-2302 (plasma kallikrein, factor XIa and XIIa). It shows a decrease in the clotting time of human plasma in the presence of increasing doses of the enzyme. Its minimum coagulant dose (MCD) is 20 ug. It promotes platelet aggregation with a maximum of aggregation of 20%, regardless of the concentration increase or the presence of calcium. It also shows 40% inhibition of the hemolytic activity promoted by the complement pathways and possess only a minor role in the induction of edema and pain in rat. This Bothrops pirajai (Piraja's lancehead) protein is Thrombin-like enzyme BpirSP41.